Here is a 326-residue protein sequence, read N- to C-terminus: Pyruvate dehydrogenase E1 component subunit alpha (326 aa).

In terms of assembly, heterodimer of an alpha and a beta chain. The cofactor is thiamine diphosphate.

It catalyses the reaction N(6)-[(R)-lipoyl]-L-lysyl-[protein] + pyruvate + H(+) = N(6)-[(R)-S(8)-acetyldihydrolipoyl]-L-lysyl-[protein] + CO2. The pyruvate dehydrogenase complex catalyzes the overall conversion of pyruvate to acetyl-CoA and CO(2). It contains multiple copies of three enzymatic components: pyruvate dehydrogenase (E1), dihydrolipoamide acetyltransferase (E2) and lipoamide dehydrogenase (E3). This Rickettsia felis (strain ATCC VR-1525 / URRWXCal2) (Rickettsia azadi) protein is Pyruvate dehydrogenase E1 component subunit alpha (pdhA).